A 409-amino-acid chain; its full sequence is 2,3-bisphosphoglycerate-independent phosphoglycerate mutase (409 aa).

A disordered region spans residues Ile160–Asp179.

Belongs to the BPG-independent phosphoglycerate mutase family. A-PGAM subfamily.

It catalyses the reaction (2R)-2-phosphoglycerate = (2R)-3-phosphoglycerate. Its pathway is carbohydrate degradation; glycolysis; pyruvate from D-glyceraldehyde 3-phosphate: step 3/5. In terms of biological role, catalyzes the interconversion of 2-phosphoglycerate and 3-phosphoglycerate. The polypeptide is 2,3-bisphosphoglycerate-independent phosphoglycerate mutase (Methanosphaera stadtmanae (strain ATCC 43021 / DSM 3091 / JCM 11832 / MCB-3)).